The sequence spans 161 residues: Transcription elongation factor GreA (161 aa).

The stretch at 46 to 71 forms a coiled coil; the sequence is AEYTAAKEKQSFLHGKLQELENNLAL.

It belongs to the GreA/GreB family.

Its function is as follows. Necessary for efficient RNA polymerase transcription elongation past template-encoded arresting sites. The arresting sites in DNA have the property of trapping a certain fraction of elongating RNA polymerases that pass through, resulting in locked ternary complexes. Cleavage of the nascent transcript by cleavage factors such as GreA or GreB allows the resumption of elongation from the new 3'terminus. GreA releases sequences of 2 to 3 nucleotides. In Syntrophus aciditrophicus (strain SB), this protein is Transcription elongation factor GreA.